Here is a 429-residue protein sequence, read N- to C-terminus: Probable alcohol acetyltransferase orf1 (429 aa).

The protein belongs to the alcohol acetyltransferase FCK4 family.

Its pathway is secondary metabolite biosynthesis. Its function is as follows. Probable alcohol acetyltransferase; part of the gene cluster that mediates the biosynthesis of the glycolipid biosurfactant ustilagic acid (UA). UA is a secreted cellobiose glycolipid that is toxic for many microorganisms and confers biocontrol activity to U.maydis. UA consists of 15,16-dihydroxypalmitic or 2,15,16-trihydroxypalmitic acid, which is O-glycosidically linked to cellobiose at its terminal hydroxyl group. In addition, the cellobiose moiety is acetylated and acylated with a short-chain hydroxy fatty acid. UA biosynthesis starts with omega-hydroxylation of palmitic acid catalyzed by the cytochrome P450 monooxygenase cyp1. Terminal hydroxylation of palmitic acid precedes subterminal hydroxylation catalyzed by the cytochrome P450 monooxygenase cyp2. Sequential glucosylation of the hydroxy fatty acid is probably catalyzed by the glycosyltransferase ugt1. The cellobiose lipid is further decorated by acetylation of the proximal glucose residue and by acylation with a short-chain beta-hydroxy fatty acid at the distal glucose residue. The acyltransferase uat1 may be a good candidate for catalyzing either acetylation or acylation of the cellobiose lipid. The fatty acid synthase fas2 may be involved in synthesis of the carbon backbone of the short-chain beta-hydroxy fatty acid esterified to the cellobiose disaccharide. The secreted UA consists of a mixture of both alpha-hydroxylated and non-hydroxylated glycolipids; therefore, alpha-hydroxylation of the long-chain fatty, catalyzed by the fatty acid hydroxylase ahd1, occurs late in UA biosynthesis and may be the last step before secretion. The chain is Probable alcohol acetyltransferase orf1 from Mycosarcoma maydis (Corn smut fungus).